The following is a 70-amino-acid chain: Translational regulator CsrA (70 aa).

The protein belongs to the CsrA/RsmA family. Homodimer; the beta-strands of each monomer intercalate to form a hydrophobic core, while the alpha-helices form wings that extend away from the core.

The protein resides in the cytoplasm. Its function is as follows. A translational regulator that binds mRNA to regulate translation initiation and/or mRNA stability. Usually binds in the 5'-UTR at or near the Shine-Dalgarno sequence preventing ribosome-binding, thus repressing translation. Its main target seems to be the major flagellin gene, while its function is anatagonized by FliW. The protein is Translational regulator CsrA of Rhodopirellula baltica (strain DSM 10527 / NCIMB 13988 / SH1).